The sequence spans 318 residues: Putative HTH-type transcriptional regulatory protein TK0539 (318 aa).

Residues 131-189 (LRELREKHGYSVNELAQLLGVSRKSLLNYERGEQAVSLDVAIQLEEIFDEALAEPIDIL) form the HTH cro/C1-type domain. A DNA-binding region (H-T-H motif) is located at residues 142–161 (VNELAQLLGVSRKSLLNYER).

This chain is Putative HTH-type transcriptional regulatory protein TK0539, found in Thermococcus kodakarensis (strain ATCC BAA-918 / JCM 12380 / KOD1) (Pyrococcus kodakaraensis (strain KOD1)).